The sequence spans 255 residues: 5'-nucleotidase SurE (255 aa).

A divalent metal cation contacts are provided by Asp8, Asp9, Ser39, and Asn91.

Belongs to the SurE nucleotidase family. The cofactor is a divalent metal cation.

It localises to the cytoplasm. The catalysed reaction is a ribonucleoside 5'-phosphate + H2O = a ribonucleoside + phosphate. Functionally, nucleotidase that shows phosphatase activity on nucleoside 5'-monophosphates. The polypeptide is 5'-nucleotidase SurE (Acinetobacter baylyi (strain ATCC 33305 / BD413 / ADP1)).